An 898-amino-acid chain; its full sequence is MRKGALKDPEIADLFFKDDPEELFIDLHEIGHGSFGAVYFATNAHTNEVVAVKKMSYSGKQTHEKWQDILKEVKFLQQLKHPNTIEYKGCYLKEHTAWLVMEYCLGSASDLLEVHKKPLQEVEIAAITHGALQGLAYLHFHSLIHRDIKAGNILLTEPGQVKLADFGSASMASPANSFVGTPYWMAPEVILAMDEGQYDGKVDIWSLGITCIELAERKPPLFNMNAMSALYHIAQNDSPTLQSREWTDSFRRFVDYCLHKIPQERPAAVELLRHDFIRRERPPKVLIDLIQRTKDAVRELDNLQYRKMKKILFQETRNGPLNESQEEEEDGEQGSNLNREVDSLGSIHSIPSTSVSTGSRSSSVNSMQEVMDESSSELVMMQEDEGTANSSASTVHKKDHVFVRDEAGHGDPRPEPRPTQSVQSRALHYRNRERFATIKSASLVTRQIHEHEQENELREQMSGYKRMRRQHQKQLIALENKLKAEMDEHRLKLQKEVETHANNSSIELEKLAKKQVATIEKEAKVAAADEKKFQQQILAQQKKDLTTFLESQKKQYKICKEKIKEEMNEDHSTPKKEKQERISKHKENLQHTQAEEEAHLLTQQRLYYDRNCRFFKRKIMIKRHEVEQQNIREELNKKRTQKEMEHAMLIRHDESTRELEYRQLHTLQKLRMDLIRLQHQTELENQLEYNKRRERELHRKHVMELRQQPKNLKAMEMQIKKQFQDTCKVQTKQYKALKNHQLEVTPKNEHKAILKTLKDEQTRKLAILAEQYEQSINEMMASQALRLDEAQEAECQALRLQLQQEMELLNAYQSKIKMQTEAQHERELQKLEQRVSLRRAHLEQKIEEELAALQKERSERIKTLLERQERETETFDMESLRMGFGNLVTLDFPKEDYR.

In terms of domain architecture, Protein kinase spans 24–277; sequence FIDLHEIGHG…AVELLRHDFI (254 aa). ATP contacts are provided by residues 30 to 38 and Lys53; that span reads IGHGSFGAV. Asp147 acts as the Proton acceptor in catalysis. 2 disordered regions span residues 316–375 and 405–424; these read TRNG…DESS and DEAG…SVQS. Ser324 carries the post-translational modification Phosphoserine; by ATM. Phosphoserine occurs at positions 343, 346, and 349. Positions 349 to 366 are enriched in low complexity; it reads SIPSTSVSTGSRSSSVNS. Thr357 bears the Phosphothreonine mark. Ser359 is modified (phosphoserine). Basic and acidic residues predominate over residues 405–416; sequence DEAGHGDPRPEP. Ser442 is modified (phosphoserine). 3 coiled-coil regions span residues 452–502, 548–649, and 754–871; these read EQEN…THAN, FLES…HAML, and LKTL…QERE. The tract at residues 565–596 is disordered; sequence EEMNEDHSTPKKEKQERISKHKENLQHTQAEE. Lys830 carries the N6-acetyllysine modification.

The protein belongs to the protein kinase superfamily. STE Ser/Thr protein kinase family. STE20 subfamily. Self-associates. Interacts with ERN1 and TRAF2. Interaction with TRAF2 is facilitated under ER stress conditions, such as treatment with tunicamycin, and may promote TRAF2 phosphorylation. Interacts (via N-terminus) with STK25; the interaction promotes STK25 abundance at the level of protein expression and/or stability. In terms of processing, autophosphorylated. Phosphorylation at Ser-324 by ATM following DNA damage is required for activation of the p38/MAPK14 stress-activated MAPK cascade. Phosphorylated at Ser-324 and on Tyr residues during T cell activation. Phosphorylated by LRRK2.

Its subcellular location is the cytoplasm. It localises to the cell membrane. The protein localises to the membrane raft. The protein resides in the lipid droplet. It catalyses the reaction L-seryl-[protein] + ATP = O-phospho-L-seryl-[protein] + ADP + H(+). The enzyme catalyses L-threonyl-[protein] + ATP = O-phospho-L-threonyl-[protein] + ADP + H(+). Functionally, serine/threonine-protein kinase that acts as a regulator of the p38/MAPK14 stress-activated MAPK cascade and of the MAPK8/JNK cascade. In response to DNA damage, involved in the G2/M transition DNA damage checkpoint by activating the p38/MAPK14 stress-activated MAPK cascade, probably by mediating phosphorylation of upstream MAP2K3 and MAP2K6 kinases. Inhibits basal activity of the MAPK8/JNK cascade and diminishes its activation in response to epidermal growth factor (EGF). Positively regulates canonical T cell receptor (TCR) signaling by preventing early PTPN6/SHP1-mediated inactivation of LCK, ensuring sustained TCR signaling that is required for optimal activation and differentiation of T cells. Phosphorylates PTPN6/SHP1 on 'Thr-394', leading to its polyubiquitination and subsequent proteasomal degradation. Required for cell surface expression of metalloprotease ADAM10 on type 1 transitional B cells which is necessary for their NOTCH-mediated development into marginal zone B cells. Also required for the NOTCH-mediated terminal differentiation of splenic conventional type 2 dendritic cells. Positively regulates osteoblast differentiation by acting as an upstream activator of the JNK pathway. Promotes JNK signaling in hepatocytes and positively regulates hepatocyte lipid storage by inhibiting beta-oxidation and triacylglycerol secretion while enhancing lipid synthesis. Restricts age-associated inflammation by negatively regulating differentiation of macrophages and their production of pro-inflammatory cytokines. Plays a role in negatively regulating the abundance of regulatory T cells in white adipose tissue. This is Serine/threonine-protein kinase TAO3 (Taok3) from Mus musculus (Mouse).